The chain runs to 254 residues: Pimeloyl-[acyl-carrier protein] methyl ester esterase (254 aa).

Residues 14–238 (VVMLHGWGLH…QASHAPFLSH (225 aa)) enclose the AB hydrolase-1 domain. Residues Trp20, 80–81 (SL), and 142–146 (FLALQ) each bind substrate. The active-site Nucleophile is the Ser80. Active-site residues include Asp204 and His232. His232 contributes to the substrate binding site.

It belongs to the AB hydrolase superfamily. Carboxylesterase BioH family. Monomer.

The protein resides in the cytoplasm. It catalyses the reaction 6-carboxyhexanoyl-[ACP] methyl ester + H2O = 6-carboxyhexanoyl-[ACP] + methanol + H(+). It participates in cofactor biosynthesis; biotin biosynthesis. Functionally, the physiological role of BioH is to remove the methyl group introduced by BioC when the pimeloyl moiety is complete. It allows to synthesize pimeloyl-ACP via the fatty acid synthetic pathway through the hydrolysis of the ester bonds of pimeloyl-ACP esters. In Chromobacterium violaceum (strain ATCC 12472 / DSM 30191 / JCM 1249 / CCUG 213 / NBRC 12614 / NCIMB 9131 / NCTC 9757 / MK), this protein is Pimeloyl-[acyl-carrier protein] methyl ester esterase.